Here is a 234-residue protein sequence, read N- to C-terminus: Transcription factor bHLH160 (234 aa).

Polar residues predominate over residues 1–13 (MSSQPNHQTSISS). The disordered stretch occupies residues 1-67 (MSSQPNHQTS…GAAKKQDHNA (67 aa)). A compositionally biased stretch (basic and acidic residues) spans 27 to 37 (IVEKESAEKDT). A bHLH domain is found at 60-115 (AKKQDHNAKERLRRMRLHASYLTLGTLLPDHSSSSSKKKWSAPSIIDNVITYIPKL).

Belongs to the bHLH protein family.

The protein resides in the nucleus. This Arabidopsis thaliana (Mouse-ear cress) protein is Transcription factor bHLH160.